A 701-amino-acid polypeptide reads, in one-letter code: Polyribonucleotide nucleotidyltransferase (701 aa).

Residues Asp-485 and Asp-491 each coordinate Mg(2+). One can recognise a KH domain in the interval 552–611 (PKIFKTTVDPEKIRDIIGPGGKMINKIIAKTNVKIDIEPDGRIFVAAPDDISGNRAISMI). An S1 motif domain is found at 621–689 (GQFFLGKVTR…RLGRIALSRK (69 aa)).

It belongs to the polyribonucleotide nucleotidyltransferase family. It depends on Mg(2+) as a cofactor.

It localises to the cytoplasm. The catalysed reaction is RNA(n+1) + phosphate = RNA(n) + a ribonucleoside 5'-diphosphate. Functionally, involved in mRNA degradation. Catalyzes the phosphorolysis of single-stranded polyribonucleotides processively in the 3'- to 5'-direction. The sequence is that of Polyribonucleotide nucleotidyltransferase from Caldicellulosiruptor saccharolyticus (strain ATCC 43494 / DSM 8903 / Tp8T 6331).